The chain runs to 191 residues: Cell division protein SepF (191 aa).

Over residues 153-178 (FPEEASPSNVSSKKTSQYKFETNTTP) the composition is skewed to polar residues. Residues 153 to 191 (FPEEASPSNVSSKKTSQYKFETNTTPEPAWGESKLSAYN) form a disordered region.

Belongs to the SepF family. Homodimer. Interacts with FtsZ.

It localises to the cytoplasm. Its function is as follows. Cell division protein that is part of the divisome complex and is recruited early to the Z-ring. Probably stimulates Z-ring formation, perhaps through the cross-linking of FtsZ protofilaments. Its function overlaps with FtsA. This chain is Cell division protein SepF, found in Prochlorococcus marinus subsp. pastoris (strain CCMP1986 / NIES-2087 / MED4).